The following is a 174-amino-acid chain: 3-hydroxydecanoyl-[acyl-carrier-protein] dehydratase (174 aa).

His71 is an active-site residue.

It belongs to the thioester dehydratase family. FabA subfamily. In terms of assembly, homodimer.

The protein resides in the cytoplasm. The catalysed reaction is a (3R)-hydroxyacyl-[ACP] = a (2E)-enoyl-[ACP] + H2O. It carries out the reaction (3R)-hydroxydecanoyl-[ACP] = (2E)-decenoyl-[ACP] + H2O. It catalyses the reaction (2E)-decenoyl-[ACP] = (3Z)-decenoyl-[ACP]. It participates in lipid metabolism; fatty acid biosynthesis. Functionally, necessary for the introduction of cis unsaturation into fatty acids. Catalyzes the dehydration of (3R)-3-hydroxydecanoyl-ACP to E-(2)-decenoyl-ACP and then its isomerization to Z-(3)-decenoyl-ACP. Can catalyze the dehydratase reaction for beta-hydroxyacyl-ACPs with saturated chain lengths up to 16:0, being most active on intermediate chain length. In Nitrobacter winogradskyi (strain ATCC 25391 / DSM 10237 / CIP 104748 / NCIMB 11846 / Nb-255), this protein is 3-hydroxydecanoyl-[acyl-carrier-protein] dehydratase.